Reading from the N-terminus, the 114-residue chain is T cell receptor beta variable 10-3 (114 aa).

An N-terminal signal peptide occupies residues 1 to 21 (MGTRLFFYVALCLLWTGHMDA). An Ig-like domain is found at 22–114 (GITQSPRHKV…TSVYFCAISE (93 aa)). Cys42 and Cys110 are oxidised to a cystine.

Alpha-beta TR is a heterodimer composed of an alpha and beta chain; disulfide-linked. The alpha-beta TR is associated with the transmembrane signaling CD3 coreceptor proteins to form the TR-CD3 (TcR or TCR). The assembly of alpha-beta TR heterodimers with CD3 occurs in the endoplasmic reticulum where a single alpha-beta TR heterodimer associates with one CD3D-CD3E heterodimer, one CD3G-CD3E heterodimer and one CD247 homodimer forming a stable octameric structure. CD3D-CD3E and CD3G-CD3E heterodimers preferentially associate with TR alpha and TR beta chains, respectively. The association of the CD247 homodimer is the last step of TcR assembly in the endoplasmic reticulum and is required for transport to the cell surface.

Its subcellular location is the cell membrane. Functionally, v region of the variable domain of T cell receptor (TR) beta chain that participates in the antigen recognition. Alpha-beta T cell receptors are antigen specific receptors which are essential to the immune response and are present on the cell surface of T lymphocytes. Recognize peptide-major histocompatibility (MH) (pMH) complexes that are displayed by antigen presenting cells (APC), a prerequisite for efficient T cell adaptive immunity against pathogens. Binding of alpha-beta TR to pMH complex initiates TR-CD3 clustering on the cell surface and intracellular activation of LCK that phosphorylates the ITAM motifs of CD3G, CD3D, CD3E and CD247 enabling the recruitment of ZAP70. In turn ZAP70 phosphorylates LAT, which recruits numerous signaling molecules to form the LAT signalosome. The LAT signalosome propagates signal branching to three major signaling pathways, the calcium, the mitogen-activated protein kinase (MAPK) kinase and the nuclear factor NF-kappa-B (NF-kB) pathways, leading to the mobilization of transcription factors that are critical for gene expression and essential for T cell growth and differentiation. The T cell repertoire is generated in the thymus, by V-(D)-J rearrangement. This repertoire is then shaped by intrathymic selection events to generate a peripheral T cell pool of self-MH restricted, non-autoaggressive T cells. Post-thymic interaction of alpha-beta TR with the pMH complexes shapes TR structural and functional avidity. The polypeptide is T cell receptor beta variable 10-3 (Homo sapiens (Human)).